Here is a 295-residue protein sequence, read N- to C-terminus: Ribosomal RNA small subunit methyltransferase A (295 aa).

Positions 28, 30, 55, 76, 101, and 131 each coordinate S-adenosyl-L-methionine.

The protein belongs to the class I-like SAM-binding methyltransferase superfamily. rRNA adenine N(6)-methyltransferase family. RsmA subfamily.

It is found in the cytoplasm. It catalyses the reaction adenosine(1518)/adenosine(1519) in 16S rRNA + 4 S-adenosyl-L-methionine = N(6)-dimethyladenosine(1518)/N(6)-dimethyladenosine(1519) in 16S rRNA + 4 S-adenosyl-L-homocysteine + 4 H(+). In terms of biological role, specifically dimethylates two adjacent adenosines (A1518 and A1519) in the loop of a conserved hairpin near the 3'-end of 16S rRNA in the 30S particle. May play a critical role in biogenesis of 30S subunits. This Pelotomaculum thermopropionicum (strain DSM 13744 / JCM 10971 / SI) protein is Ribosomal RNA small subunit methyltransferase A.